Here is a 65-residue protein sequence, read N- to C-terminus: MPKMKTKSAAAKRFKRTAKGGFKSGNSFTSHRFHGKTKKQRRQLRGLSMMDKSNVKRYKKMIPAK.

Composition is skewed to basic residues over residues 1–18 (MPKMKTKSAAAKRFKRTA), 31–44 (HRFHGKTKKQRRQL), and 55–65 (VKRYKKMIPAK). The tract at residues 1–65 (MPKMKTKSAA…KRYKKMIPAK (65 aa)) is disordered.

The protein belongs to the bacterial ribosomal protein bL35 family.

This is Large ribosomal subunit protein bL35 from Limosilactobacillus fermentum (strain NBRC 3956 / LMG 18251) (Lactobacillus fermentum).